Here is a 457-residue protein sequence, read N- to C-terminus: Phosphoglucosamine mutase (457 aa).

Serine 103 serves as the catalytic Phosphoserine intermediate. Mg(2+)-binding residues include serine 103, aspartate 244, aspartate 246, and aspartate 248. Serine 103 is modified (phosphoserine).

This sequence belongs to the phosphohexose mutase family. Mg(2+) serves as cofactor. In terms of processing, activated by phosphorylation.

The enzyme catalyses alpha-D-glucosamine 1-phosphate = D-glucosamine 6-phosphate. Functionally, catalyzes the conversion of glucosamine-6-phosphate to glucosamine-1-phosphate. The sequence is that of Phosphoglucosamine mutase from Granulibacter bethesdensis (strain ATCC BAA-1260 / CGDNIH1).